We begin with the raw amino-acid sequence, 311 residues long: Ribonuclease HIII (311 aa).

An RNase H type-2 domain is found at 95 to 311; that stretch reads MSIVGSDEVG…NTEKAFRLLK (217 aa). The a divalent metal cation site is built by aspartate 101, glutamate 102, and aspartate 206.

It belongs to the RNase HII family. RnhC subfamily. The cofactor is Mn(2+). It depends on Mg(2+) as a cofactor.

It is found in the cytoplasm. It catalyses the reaction Endonucleolytic cleavage to 5'-phosphomonoester.. Functionally, endonuclease that specifically degrades the RNA of RNA-DNA hybrids. The polypeptide is Ribonuclease HIII (Bacillus cereus (strain ATCC 10987 / NRS 248)).